Reading from the N-terminus, the 503-residue chain is Lysine--tRNA ligase (503 aa).

Mg(2+)-binding residues include Glu-413 and Glu-420.

The protein belongs to the class-II aminoacyl-tRNA synthetase family. As to quaternary structure, homodimer. Mg(2+) is required as a cofactor.

It localises to the cytoplasm. The catalysed reaction is tRNA(Lys) + L-lysine + ATP = L-lysyl-tRNA(Lys) + AMP + diphosphate. The protein is Lysine--tRNA ligase of Mannheimia succiniciproducens (strain KCTC 0769BP / MBEL55E).